Consider the following 91-residue polypeptide: UPF0147 protein APE_2336a (91 aa).

The protein belongs to the UPF0147 family.

In Aeropyrum pernix (strain ATCC 700893 / DSM 11879 / JCM 9820 / NBRC 100138 / K1), this protein is UPF0147 protein APE_2336a.